A 753-amino-acid polypeptide reads, in one-letter code: 5-methyltetrahydropteroyltriglutamate--homocysteine methyltransferase (753 aa).

Residues arginine 17–lysine 20 and lysine 117 each bind 5-methyltetrahydropteroyltri-L-glutamate. Residues isoleucine 431 to serine 433 and glutamate 484 contribute to the L-homocysteine site. Residues isoleucine 431–serine 433 and glutamate 484 contribute to the L-methionine site. 5-methyltetrahydropteroyltri-L-glutamate is bound by residues arginine 515–cysteine 516 and tryptophan 561. Residue aspartate 599 coordinates L-homocysteine. Aspartate 599 is an L-methionine binding site. Residue glutamate 605 participates in 5-methyltetrahydropteroyltri-L-glutamate binding. The Zn(2+) site is built by histidine 641, cysteine 643, and glutamate 665. The active-site Proton donor is the histidine 694. Cysteine 726 is a Zn(2+) binding site.

It belongs to the vitamin-B12 independent methionine synthase family. Zn(2+) serves as cofactor.

The enzyme catalyses 5-methyltetrahydropteroyltri-L-glutamate + L-homocysteine = tetrahydropteroyltri-L-glutamate + L-methionine. Its pathway is amino-acid biosynthesis; L-methionine biosynthesis via de novo pathway; L-methionine from L-homocysteine (MetE route): step 1/1. In terms of biological role, catalyzes the transfer of a methyl group from 5-methyltetrahydrofolate to homocysteine resulting in methionine formation. This is 5-methyltetrahydropteroyltriglutamate--homocysteine methyltransferase from Escherichia coli O139:H28 (strain E24377A / ETEC).